Here is a 293-residue protein sequence, read N- to C-terminus: Homoserine kinase (293 aa).

80 to 90 (RPASGLGSSAA) is a binding site for ATP.

Belongs to the GHMP kinase family. Homoserine kinase subfamily.

Its subcellular location is the cytoplasm. It catalyses the reaction L-homoserine + ATP = O-phospho-L-homoserine + ADP + H(+). It participates in amino-acid biosynthesis; L-threonine biosynthesis; L-threonine from L-aspartate: step 4/5. Its function is as follows. Catalyzes the ATP-dependent phosphorylation of L-homoserine to L-homoserine phosphate. The chain is Homoserine kinase from Halorubrum lacusprofundi (strain ATCC 49239 / DSM 5036 / JCM 8891 / ACAM 34).